The sequence spans 336 residues: MKDRYILAFETSCDETSVAVLKNETELLSNVIASQIESHKRFGGVVPEVASRHHVEVITVCIEEALAEAGISEEQVTAVAVTYGPGLVGALLVGLAAAKSFAWAHDIPLIPVNHMAGHLMAAQSVEPLEFPLLALLVSGGHTELVYVSQAGDYKIVGETRDDAVGEAYDKVGRVMGLTYPAGREIDLLAHEGQDIYDFPRAMIKEDNLEFSFSGLKSAFINLHHNAQQKGEVLSNQDLSASFQAAVMDILMAKTKKALEKYPVKTLVVAGGVAANQGLRERLAAEIQDVKVIIPPLRLCGDNAGMIAYASVSEWNKENFASLDLNAKPSLAFETME.

2 residues coordinate Fe cation: His-114 and His-118. Substrate is bound by residues 136-140 (LVSGG), Asp-169, Gly-182, Asp-186, and Asn-275. Fe cation is bound at residue Asp-301.

The protein belongs to the KAE1 / TsaD family. Fe(2+) serves as cofactor.

It localises to the cytoplasm. It catalyses the reaction L-threonylcarbamoyladenylate + adenosine(37) in tRNA = N(6)-L-threonylcarbamoyladenosine(37) in tRNA + AMP + H(+). In terms of biological role, required for the formation of a threonylcarbamoyl group on adenosine at position 37 (t(6)A37) in tRNAs that read codons beginning with adenine. Is involved in the transfer of the threonylcarbamoyl moiety of threonylcarbamoyl-AMP (TC-AMP) to the N6 group of A37, together with TsaE and TsaB. TsaD likely plays a direct catalytic role in this reaction. This chain is tRNA N6-adenosine threonylcarbamoyltransferase, found in Streptococcus sanguinis (strain SK36).